Reading from the N-terminus, the 368-residue chain is Phospho-N-acetylmuramoyl-pentapeptide-transferase (368 aa).

10 helical membrane passes run 34–54, 79–99, 102–122, 140–160, 176–196, 207–227, 247–267, 271–291, 296–316, and 345–365; these read GAVV…IDHL, TPTM…VLWA, LNPY…VGFY, ARLL…VRLG, LVIK…VGAG, GLAI…AYLA, LAVL…FNAP, IFMG…IAVA, IVLA…IVQV, and QIVI…LSTL.

The protein belongs to the glycosyltransferase 4 family. MraY subfamily. The cofactor is Mg(2+).

The protein resides in the cell inner membrane. The catalysed reaction is UDP-N-acetyl-alpha-D-muramoyl-L-alanyl-gamma-D-glutamyl-meso-2,6-diaminopimeloyl-D-alanyl-D-alanine + di-trans,octa-cis-undecaprenyl phosphate = di-trans,octa-cis-undecaprenyl diphospho-N-acetyl-alpha-D-muramoyl-L-alanyl-D-glutamyl-meso-2,6-diaminopimeloyl-D-alanyl-D-alanine + UMP. The protein operates within cell wall biogenesis; peptidoglycan biosynthesis. In terms of biological role, catalyzes the initial step of the lipid cycle reactions in the biosynthesis of the cell wall peptidoglycan: transfers peptidoglycan precursor phospho-MurNAc-pentapeptide from UDP-MurNAc-pentapeptide onto the lipid carrier undecaprenyl phosphate, yielding undecaprenyl-pyrophosphoryl-MurNAc-pentapeptide, known as lipid I. In Bradyrhizobium sp. (strain ORS 278), this protein is Phospho-N-acetylmuramoyl-pentapeptide-transferase.